The sequence spans 380 residues: Cytochrome b (380 aa).

4 consecutive transmembrane segments (helical) span residues 34–54, 78–99, 114–134, and 179–199; these read FGSL…LLAT, WLIR…YLHI, WNTG…GYVL, and FFAL…IHLT. Heme b-binding residues include His-84 and His-98. Residues His-183 and His-197 each coordinate heme b. Residue His-202 participates in a ubiquinone binding. Helical transmembrane passes span 227-247, 289-309, 321-341, and 348-368; these read LKDI…ALFS, LGGV…PLLH, FSQF…WVGS, and FIII…LLFP.

Belongs to the cytochrome b family. In terms of assembly, the cytochrome bc1 complex contains 11 subunits: 3 respiratory subunits (MT-CYB, CYC1 and UQCRFS1), 2 core proteins (UQCRC1 and UQCRC2) and 6 low-molecular weight proteins (UQCRH/QCR6, UQCRB/QCR7, UQCRQ/QCR8, UQCR10/QCR9, UQCR11/QCR10 and a cleavage product of UQCRFS1). This cytochrome bc1 complex then forms a dimer. Heme b serves as cofactor.

It is found in the mitochondrion inner membrane. In terms of biological role, component of the ubiquinol-cytochrome c reductase complex (complex III or cytochrome b-c1 complex) that is part of the mitochondrial respiratory chain. The b-c1 complex mediates electron transfer from ubiquinol to cytochrome c. Contributes to the generation of a proton gradient across the mitochondrial membrane that is then used for ATP synthesis. The chain is Cytochrome b (MT-CYB) from Alca torda (Razorbill).